A 118-amino-acid chain; its full sequence is UPF0344 protein Aflv_2205 (118 aa).

The next 4 helical transmembrane spans lie at Ala4–Ala24, Met32–Leu52, Phe60–Leu80, and Phe96–Phe116.

Belongs to the UPF0344 family.

Its subcellular location is the cell membrane. The sequence is that of UPF0344 protein Aflv_2205 from Anoxybacillus flavithermus (strain DSM 21510 / WK1).